The sequence spans 353 residues: Phosphate acyltransferase (353 aa).

It belongs to the PlsX family. As to quaternary structure, homodimer. Probably interacts with PlsY.

Its subcellular location is the cytoplasm. It carries out the reaction a fatty acyl-[ACP] + phosphate = an acyl phosphate + holo-[ACP]. Its pathway is lipid metabolism; phospholipid metabolism. Functionally, catalyzes the reversible formation of acyl-phosphate (acyl-PO(4)) from acyl-[acyl-carrier-protein] (acyl-ACP). This enzyme utilizes acyl-ACP as fatty acyl donor, but not acyl-CoA. In Syntrophobacter fumaroxidans (strain DSM 10017 / MPOB), this protein is Phosphate acyltransferase.